A 533-amino-acid polypeptide reads, in one-letter code: Retinoid isomerohydrolase (533 aa).

Serine 2 carries the N-acetylserine modification. 2 positions are modified to phosphothreonine: threonine 101 and threonine 105. A lipid anchor (S-palmitoyl cysteine; in membrane form) is attached at cysteine 112. Lysine 113 is subject to N6-acetyllysine. A Phosphoserine modification is found at serine 117. Residue histidine 180 coordinates Fe cation. A lipid anchor (S-palmitoyl cysteine; in membrane form) is attached at cysteine 231. Positions 241 and 313 each coordinate Fe cation. S-palmitoyl cysteine; in membrane form attachment occurs at residues cysteine 329 and cysteine 330. A Fe cation-binding site is contributed by histidine 527.

It belongs to the carotenoid oxygenase family. In terms of assembly, interacts with MYO7A; this mediates light-dependent intracellular transport of RPE65. Fe(2+) serves as cofactor. Post-translationally, palmitoylation by LRAT regulates ligand binding specificity; the palmitoylated form (membrane form) specifically binds all-trans-retinyl-palmitate, while the soluble unpalmitoylated form binds all-trans-retinol (vitamin A). As to expression, retinal pigment epithelium specific.

It localises to the cytoplasm. Its subcellular location is the cell membrane. The protein localises to the microsome membrane. The catalysed reaction is an all-trans-retinyl ester + H2O = 11-cis-retinol + a fatty acid + H(+). The enzyme catalyses lutein = (3R,3'S)-zeaxanthin. It catalyses the reaction all-trans-retinyl hexadecanoate + H2O = 11-cis-retinol + hexadecanoate + H(+). Critical isomerohydrolase in the retinoid cycle involved in regeneration of 11-cis-retinal, the chromophore of rod and cone opsins. Catalyzes the cleavage and isomerization of all-trans-retinyl fatty acid esters to 11-cis-retinol which is further oxidized by 11-cis retinol dehydrogenase to 11-cis-retinal for use as visual chromophore. Essential for the production of 11-cis retinal for both rod and cone photoreceptors. Also capable of catalyzing the isomerization of lutein to meso-zeaxanthin an eye-specific carotenoid. The soluble form binds vitamin A (all-trans-retinol), making it available for LRAT processing to all-trans-retinyl ester. The membrane form, palmitoylated by LRAT, binds all-trans-retinyl esters, making them available for IMH (isomerohydrolase) processing to all-cis-retinol. The soluble form is regenerated by transferring its palmitoyl groups onto 11-cis-retinol, a reaction catalyzed by LRAT. The polypeptide is Retinoid isomerohydrolase (RPE65) (Bos taurus (Bovine)).